The chain runs to 613 residues: Dihydroxy-acid dehydratase (613 aa).

Mg(2+) is bound at residue D81. Position 122 (C122) interacts with [2Fe-2S] cluster. Residues D123 and K124 each contribute to the Mg(2+) site. K124 carries the post-translational modification N6-carboxylysine. C195 serves as a coordination point for [2Fe-2S] cluster. Mg(2+) is bound at residue E491. S517 (proton acceptor) is an active-site residue.

This sequence belongs to the IlvD/Edd family. As to quaternary structure, homodimer. The cofactor is [2Fe-2S] cluster. It depends on Mg(2+) as a cofactor.

It catalyses the reaction (2R)-2,3-dihydroxy-3-methylbutanoate = 3-methyl-2-oxobutanoate + H2O. The catalysed reaction is (2R,3R)-2,3-dihydroxy-3-methylpentanoate = (S)-3-methyl-2-oxopentanoate + H2O. The protein operates within amino-acid biosynthesis; L-isoleucine biosynthesis; L-isoleucine from 2-oxobutanoate: step 3/4. It participates in amino-acid biosynthesis; L-valine biosynthesis; L-valine from pyruvate: step 3/4. In terms of biological role, functions in the biosynthesis of branched-chain amino acids. Catalyzes the dehydration of (2R,3R)-2,3-dihydroxy-3-methylpentanoate (2,3-dihydroxy-3-methylvalerate) into 2-oxo-3-methylpentanoate (2-oxo-3-methylvalerate) and of (2R)-2,3-dihydroxy-3-methylbutanoate (2,3-dihydroxyisovalerate) into 2-oxo-3-methylbutanoate (2-oxoisovalerate), the penultimate precursor to L-isoleucine and L-valine, respectively. The sequence is that of Dihydroxy-acid dehydratase from Buchnera aphidicola subsp. Melaphis rhois.